Here is a 433-residue protein sequence, read N- to C-terminus: 5-methylthioadenosine/S-adenosylhomocysteine deaminase (433 aa).

The Zn(2+) site is built by His-62 and His-64. Glu-91, Arg-143, and His-183 together coordinate substrate. Residue His-210 participates in Zn(2+) binding. Residues Glu-213 and Asp-298 each coordinate substrate. Residue Asp-298 coordinates Zn(2+).

This sequence belongs to the metallo-dependent hydrolases superfamily. MTA/SAH deaminase family. Zn(2+) is required as a cofactor.

It catalyses the reaction S-adenosyl-L-homocysteine + H2O + H(+) = S-inosyl-L-homocysteine + NH4(+). The catalysed reaction is S-methyl-5'-thioadenosine + H2O + H(+) = S-methyl-5'-thioinosine + NH4(+). Catalyzes the deamination of 5-methylthioadenosine and S-adenosyl-L-homocysteine into 5-methylthioinosine and S-inosyl-L-homocysteine, respectively. Is also able to deaminate adenosine. The protein is 5-methylthioadenosine/S-adenosylhomocysteine deaminase of Caldanaerobacter subterraneus subsp. tengcongensis (strain DSM 15242 / JCM 11007 / NBRC 100824 / MB4) (Thermoanaerobacter tengcongensis).